The chain runs to 149 residues: MADQLTEEQIAEFKEAFSLFDKDGDGTITTKELGTVMRSLGQNPTEAELADMINEVDADGNGTIDFPEFLTMMARKMKDTDSEEEILEAFKVFDKDGNGFISAAELRHIMTNLGEKLTDEEVDEMIREADIDGDGQINYEEFVKMMMSK.

An N-acetylalanine modification is found at Ala-2. EF-hand domains are found at residues 8–43 (EQIA…LGQN), 44–79 (PTEA…KMKD), 81–116 (DSEE…LGEK), and 117–149 (LTDE…MMSK). 14 residues coordinate Ca(2+): Asp-21, Asp-23, Asp-25, Thr-27, Glu-32, Asp-57, Asp-59, Asn-61, Thr-63, Glu-68, Asp-94, Asp-96, Asn-98, and Glu-105. Lys-116 is modified (N6,N6,N6-trimethyllysine). Ca(2+)-binding residues include Asp-130, Asp-132, Asp-134, Gln-136, and Glu-141.

The protein belongs to the calmodulin family.

In terms of biological role, calmodulin mediates the control of a large number of enzymes, ion channels and other proteins by Ca(2+). Among the enzymes to be stimulated by the calmodulin-Ca(2+) complex are a number of protein kinases and phosphatases. In Saccharina japonica (Sweet kelp), this protein is Calmodulin (cam).